The following is a 98-amino-acid chain: Molybdopterin synthase sulfur carrier subunit (98 aa).

The residue at position 98 (glycine 98) is a 1-thioglycine; alternate. Glycine 98 bears the Glycyl adenylate; alternate mark.

The protein belongs to the MoaD family. MOCS2A subfamily. In terms of assembly, heterotetramer; composed of 2 small (MOCS2A) and 2 large (MOCS2B) subunits. Post-translationally, C-terminal thiocarboxylation occurs in 2 steps, it is first acyl-adenylated (-COAMP) via the hesA/moeB/thiF part of MOCS3, then thiocarboxylated (-COSH) via the rhodanese domain of MOCS3.

Its subcellular location is the cytoplasm. It participates in cofactor biosynthesis; molybdopterin biosynthesis. Acts as a sulfur carrier required for molybdopterin biosynthesis. Component of the molybdopterin synthase complex that catalyzes the conversion of precursor Z into molybdopterin by mediating the incorporation of 2 sulfur atoms into precursor Z to generate a dithiolene group. In the complex, serves as sulfur donor by being thiocarboxylated (-COSH) at its C-terminus by MOCS3. After interaction with MOCS2B, the sulfur is then transferred to precursor Z to form molybdopterin. In Aedes aegypti (Yellowfever mosquito), this protein is Molybdopterin synthase sulfur carrier subunit.